The sequence spans 128 residues: Small ribosomal subunit protein eS6 (128 aa).

Belongs to the eukaryotic ribosomal protein eS6 family.

The polypeptide is Small ribosomal subunit protein eS6 (Thermoplasma volcanium (strain ATCC 51530 / DSM 4299 / JCM 9571 / NBRC 15438 / GSS1)).